The sequence spans 629 residues: tRNA uridine 5-carboxymethylaminomethyl modification enzyme MnmG (629 aa).

13 to 18 (GGGHAG) lines the FAD pocket. 273–287 (GPRYCPSIEDKIHRF) provides a ligand contact to NAD(+).

This sequence belongs to the MnmG family. Homodimer. Heterotetramer of two MnmE and two MnmG subunits. The cofactor is FAD.

It is found in the cytoplasm. Functionally, NAD-binding protein involved in the addition of a carboxymethylaminomethyl (cmnm) group at the wobble position (U34) of certain tRNAs, forming tRNA-cmnm(5)s(2)U34. The polypeptide is tRNA uridine 5-carboxymethylaminomethyl modification enzyme MnmG (Shewanella baltica (strain OS155 / ATCC BAA-1091)).